The following is a 340-amino-acid chain: Replication factor C subunit 5 (340 aa).

N-acetylmethionine is present on M1. Residue 60 to 67 (GPPGTGKT) participates in ATP binding.

It belongs to the activator 1 small subunits family. As to quaternary structure, subunit of the RFC complex, an heteropentameric complex consisting of a large subunit RFC1 and four small subunits RFC2, RFC3, RFC4 and RFC5; the RFC complex interacts with PCNA. Forms an heterotetrameric complex with RFC2, RFC3 and RFC4; this complex has ATPase activity but is not stimulated by PCNA. The heterotetramer of subunits RFC2, RFC3, RFC4 and RFC5 interacts with RAD17.

It is found in the nucleus. In terms of biological role, subunit of the replication factor C (RFC) complex which acts during elongation of primed DNA templates by DNA polymerases delta and epsilon, and is necessary for ATP-dependent loading of proliferating cell nuclear antigen (PCNA) onto primed DNA. The sequence is that of Replication factor C subunit 5 (RFC5) from Homo sapiens (Human).